We begin with the raw amino-acid sequence, 620 residues long: 1-deoxy-D-xylulose-5-phosphate synthase (620 aa).

Residues His-80 and 121 to 123 (GHS) contribute to the thiamine diphosphate site. Asp-152 lines the Mg(2+) pocket. Residues 153-154 (GA), Asn-181, Tyr-288, and Glu-370 each bind thiamine diphosphate. Residue Asn-181 participates in Mg(2+) binding.

It belongs to the transketolase family. DXPS subfamily. Homodimer. The cofactor is Mg(2+). Thiamine diphosphate serves as cofactor.

It carries out the reaction D-glyceraldehyde 3-phosphate + pyruvate + H(+) = 1-deoxy-D-xylulose 5-phosphate + CO2. It participates in metabolic intermediate biosynthesis; 1-deoxy-D-xylulose 5-phosphate biosynthesis; 1-deoxy-D-xylulose 5-phosphate from D-glyceraldehyde 3-phosphate and pyruvate: step 1/1. Catalyzes the acyloin condensation reaction between C atoms 2 and 3 of pyruvate and glyceraldehyde 3-phosphate to yield 1-deoxy-D-xylulose-5-phosphate (DXP). In Escherichia coli O6:K15:H31 (strain 536 / UPEC), this protein is 1-deoxy-D-xylulose-5-phosphate synthase.